Reading from the N-terminus, the 387-residue chain is Odorant receptor 94a (387 aa).

Residues 1–45 (MDKHKDRIESMRLILQVMQLFGLWPWSLKSEEEWTFTGFVKRNYR) lie on the Cytoplasmic side of the membrane. Residues 46 to 66 (FLLHLPITFTFIGLMWLEAFI) traverse the membrane as a helical segment. Residues 67–75 (SSNLEQAGQ) are Extracellular-facing. A helical transmembrane segment spans residues 76-96 (VLYMSITEMALVVKILSIWHY). The Cytoplasmic portion of the chain corresponds to 97 to 133 (RTEAWRLMYELQHAPDYQLHNQEEVDFWRREQRFFKW). Residues 134–154 (FFYIYILISLGVVYSGCTGVL) traverse the membrane as a helical segment. Topologically, residues 155 to 191 (FLEGYELPFAYYVPFEWQNERRYWFAYGYDMAGMTLT) are extracellular. A helical transmembrane segment spans residues 192 to 212 (CISNITLDTLGCYFLFHISLL). The Cytoplasmic portion of the chain corresponds to 213–255 (YRLLGLRLRETKNMKNDTIFGQQLRAIFIMHQRIRSLTLTCQR). A helical membrane pass occupies residues 256-276 (IVSPYILSQIILSALIICFSG). Residues 277 to 290 (YRLQHVGIRDNPGQ) are Extracellular-facing. A helical membrane pass occupies residues 291–311 (FISMLQFVSVMILQIYLPCYY). Over 312 to 362 (GNEITVYANQLTNEVYHTNWLECRPPIRKLLNAYMEHLKKPVTIRAGNFFA) the chain is Cytoplasmic. Residues 363 to 383 (VGLPIFVKTINNAYSFLALLL) traverse the membrane as a helical segment. The N-linked (GlcNAc...) asparagine glycan is linked to N384. Residues 384–387 (NVSN) lie on the Extracellular side of the membrane.

It belongs to the insect chemoreceptor superfamily. Heteromeric odorant receptor channel (TC 1.A.69) family. Or2a subfamily. Interacts with Orco. Complexes exist early in the endomembrane system in olfactory sensory neurons (OSNs), coupling these complexes to the conserved ciliary trafficking pathway.

It is found in the cell membrane. Functionally, odorant receptor which mediates acceptance or avoidance behavior, depending on its substrates. The odorant receptor repertoire encodes a large collection of odor stimuli that vary widely in identity, intensity, and duration. May form a complex with Orco to form odorant-sensing units, providing sensitive and prolonged odorant signaling and calcium permeability. The sequence is that of Odorant receptor 94a (Or94a) from Drosophila melanogaster (Fruit fly).